Consider the following 533-residue polypeptide: ATP synthase F(1) complex catalytic subunit beta, mitochondrial (533 aa).

A mitochondrion-targeting transit peptide spans 1 to 53; that stretch reads MLGLAGRCSAAAASAARPALRRAAGPSHGFLPLLLSRGAGPAAAVGARRDHAA. 6 residues coordinate ADP: Gly-214, Val-215, Gly-216, Lys-217, Thr-218, and Val-219. An ATP-binding site is contributed by Gly-214. Residues Gly-214, Val-215, Gly-216, Lys-217, and Thr-218 each contribute to the phosphate site. ATP contacts are provided by Gly-216, Lys-217, Thr-218, and Val-219. Thr-218 is a binding site for Mg(2+). Glu-243 serves as a coordination point for Mg(2+). Arg-244 is an ATP binding site.

As to quaternary structure, homotrimer. Component of the ATP synthase complex composed at least of ATP5F1A/subunit alpha, ATP5F1B/subunit beta, ATP5MC1/subunit c (homooctomer), MT-ATP6/subunit a, MT-ATP8/subunit 8, ATP5ME/subunit e, ATP5MF/subunit f, ATP5MG/subunit g, ATP5MK/subunit k, ATP5MJ/subunit j, ATP5F1C/subunit gamma, ATP5F1D/subunit delta, ATP5F1E/subunit epsilon, ATP5PF/subunit F6, ATP5PB/subunit b, ATP5PD/subunit d, ATP5PO/subunit OSCP. ATP synthase complex consists of a soluble F(1) head domain (subunits alpha(3) and beta(3)) - the catalytic core - and a membrane F(0) domain - the membrane proton channel (subunits c, a, 8, e, f, g, k and j). These two domains are linked by a central stalk (subunits gamma, delta, and epsilon) rotating inside the F1 region and a stationary peripheral stalk (subunits F6, b, d, and OSCP).

It is found in the mitochondrion inner membrane. The catalysed reaction is ATP + H2O + 4 H(+)(in) = ADP + phosphate + 5 H(+)(out). Catalytic subunit beta, of the mitochondrial membrane ATP synthase complex (F(1)F(0) ATP synthase or Complex V) that produces ATP from ADP in the presence of a proton gradient across the membrane which is generated by electron transport complexes of the respiratory chain. ATP synthase complex consist of a soluble F(1) head domain - the catalytic core - and a membrane F(1) domain - the membrane proton channel. These two domains are linked by a central stalk rotating inside the F(1) region and a stationary peripheral stalk. During catalysis, ATP synthesis in the catalytic domain of F(1) is coupled via a rotary mechanism of the central stalk subunits to proton translocation. In vivo, can only synthesize ATP although its ATP hydrolase activity can be activated artificially in vitro. With the subunit alpha (ATP5F1A), forms the catalytic core in the F(1) domain. This Gallus gallus (Chicken) protein is ATP synthase F(1) complex catalytic subunit beta, mitochondrial.